Reading from the N-terminus, the 212-residue chain is Octanoyltransferase (212 aa).

Residues 31–209 enclose the BPL/LPL catalytic domain; the sequence is AETQDEIWLV…HFANLLGYNI (179 aa). Substrate-binding positions include 70–77, 138–140, and 151–153; these read RGGQITYH, SLG, and GLA. Cys169 acts as the Acyl-thioester intermediate in catalysis.

The protein belongs to the LipB family.

It is found in the cytoplasm. The enzyme catalyses octanoyl-[ACP] + L-lysyl-[protein] = N(6)-octanoyl-L-lysyl-[protein] + holo-[ACP] + H(+). The protein operates within protein modification; protein lipoylation via endogenous pathway; protein N(6)-(lipoyl)lysine from octanoyl-[acyl-carrier-protein]: step 1/2. Functionally, catalyzes the transfer of endogenously produced octanoic acid from octanoyl-acyl-carrier-protein onto the lipoyl domains of lipoate-dependent enzymes. Lipoyl-ACP can also act as a substrate although octanoyl-ACP is likely to be the physiological substrate. This chain is Octanoyltransferase, found in Haemophilus influenzae (strain ATCC 51907 / DSM 11121 / KW20 / Rd).